The following is a 61-amino-acid chain: Small ribosomal subunit protein uS14 (61 aa).

Residues C24, C27, C40, and C43 each coordinate Zn(2+).

The protein belongs to the universal ribosomal protein uS14 family. Zinc-binding uS14 subfamily. As to quaternary structure, part of the 30S ribosomal subunit. Contacts proteins S3 and S10. Requires Zn(2+) as cofactor.

Its function is as follows. Binds 16S rRNA, required for the assembly of 30S particles and may also be responsible for determining the conformation of the 16S rRNA at the A site. The chain is Small ribosomal subunit protein uS14 from Clostridium acetobutylicum (strain ATCC 824 / DSM 792 / JCM 1419 / IAM 19013 / LMG 5710 / NBRC 13948 / NRRL B-527 / VKM B-1787 / 2291 / W).